The chain runs to 261 residues: 5'-nucleotidase SurE (261 aa).

The a divalent metal cation site is built by D18, D19, S50, and N102.

Belongs to the SurE nucleotidase family. A divalent metal cation serves as cofactor.

It is found in the cytoplasm. It catalyses the reaction a ribonucleoside 5'-phosphate + H2O = a ribonucleoside + phosphate. In terms of biological role, nucleotidase that shows phosphatase activity on nucleoside 5'-monophosphates. This Rhodospirillum rubrum (strain ATCC 11170 / ATH 1.1.1 / DSM 467 / LMG 4362 / NCIMB 8255 / S1) protein is 5'-nucleotidase SurE.